Consider the following 478-residue polypeptide: Serine/threonine-protein phosphatase T (478 aa).

TPR repeat units lie at residues 9-42 (ATAL…YDRE), 43-76 (PSFF…DPAY), and 78-110 (KAYW…EPNN). The tract at residues 151 to 463 (AVDDSYDGVR…QVFEAVPHPD (313 aa)) is catalytic. Positions 221, 223, 250, and 282 each coordinate Mn(2+). Histidine 283 functions as the Proton donor/acceptor in the catalytic mechanism. Positions 331 and 408 each coordinate Mn(2+).

The protein belongs to the PPP phosphatase family. PP-5 (PP-T) subfamily. Mg(2+) serves as cofactor. Requires Mn(2+) as cofactor.

Its subcellular location is the nucleus. The catalysed reaction is O-phospho-L-seryl-[protein] + H2O = L-seryl-[protein] + phosphate. The enzyme catalyses O-phospho-L-threonyl-[protein] + H2O = L-threonyl-[protein] + phosphate. Protein phosphatase that specifically binds to and dephosphorylates the molecular chaperone Hsp90. Dephosphorylation positively regulates the Hsp90 chaperone machinery. This chain is Serine/threonine-protein phosphatase T, found in Aspergillus oryzae (strain ATCC 42149 / RIB 40) (Yellow koji mold).